We begin with the raw amino-acid sequence, 351 residues long: Cobalt-precorrin-5B C(1)-methyltransferase (351 aa).

This sequence belongs to the CbiD family.

The catalysed reaction is Co-precorrin-5B + S-adenosyl-L-methionine = Co-precorrin-6A + S-adenosyl-L-homocysteine. It functions in the pathway cofactor biosynthesis; adenosylcobalamin biosynthesis; cob(II)yrinate a,c-diamide from sirohydrochlorin (anaerobic route): step 6/10. Catalyzes the methylation of C-1 in cobalt-precorrin-5B to form cobalt-precorrin-6A. This is Cobalt-precorrin-5B C(1)-methyltransferase from Thermosipho africanus (strain TCF52B).